The chain runs to 21 residues: GLLSKVLGVGKKVLCGVSGLC.

Cysteine 15 and cysteine 21 are joined by a disulfide.

As to expression, expressed by the skin dorsal glands.

It localises to the secreted. In terms of biological role, thanks to its single linear amphipathic alpha-helix, may integrate into membrane phospholipids, leading to lysis of the membrane. Shows antibacterial activity against both Gram-positive and Gram-negative bacteria and against the fungus C.albicans. Has no hemolytic activity. In Pelophylax nigromaculatus (Black-spotted frog), this protein is Nigrocin-2.